The following is a 170-amino-acid chain: Crossover junction endodeoxyribonuclease RuvC (170 aa).

Catalysis depends on residues Asp-11, Glu-71, and Asp-143. Mg(2+)-binding residues include Asp-11, Glu-71, and Asp-143.

Belongs to the RuvC family. In terms of assembly, homodimer which binds Holliday junction (HJ) DNA. The HJ becomes 2-fold symmetrical on binding to RuvC with unstacked arms; it has a different conformation from HJ DNA in complex with RuvA. In the full resolvosome a probable DNA-RuvA(4)-RuvB(12)-RuvC(2) complex forms which resolves the HJ. Requires Mg(2+) as cofactor.

It is found in the cytoplasm. The catalysed reaction is Endonucleolytic cleavage at a junction such as a reciprocal single-stranded crossover between two homologous DNA duplexes (Holliday junction).. The RuvA-RuvB-RuvC complex processes Holliday junction (HJ) DNA during genetic recombination and DNA repair. Endonuclease that resolves HJ intermediates. Cleaves cruciform DNA by making single-stranded nicks across the HJ at symmetrical positions within the homologous arms, yielding a 5'-phosphate and a 3'-hydroxyl group; requires a central core of homology in the junction. The consensus cleavage sequence is 5'-(A/T)TT(C/G)-3'. Cleavage occurs on the 3'-side of the TT dinucleotide at the point of strand exchange. HJ branch migration catalyzed by RuvA-RuvB allows RuvC to scan DNA until it finds its consensus sequence, where it cleaves and resolves the cruciform DNA. The chain is Crossover junction endodeoxyribonuclease RuvC from Rhizobium meliloti (strain 1021) (Ensifer meliloti).